The primary structure comprises 492 residues: Virion host shutoff protein (492 aa).

3 disordered regions span residues glutamate 110 to serine 130, serine 288 to methionine 307, and glutamate 334 to glutamine 371.

Belongs to the herpesviridae VHS protein family. Interacts with human EIF4H, EIF4A1 and EIF4A2; interaction with eIF4AI and EIF4A2 presumably allows Vhs protein to associate with the eIF4F cap-binding complex.

It is found in the virion. Functionally, minor structural protein that acts as an endoribonuclease during lytic infection. Degrades host mRNAs in the cytoplasm by cutting them at preferred sites, including some in regions of translation initiation. Together with inhibition of host splicing by ICP27, contributes to an overall decrease in host protein synthesis. Also, after the onset of viral transcription, accelerates the turnover of viral mRNA, thereby facilitating the sequential expression of different classes of viral genes. Binds translation initiation factors eIF4H, eIF4AI, and eIF4AII, thereby may interact directly with the translation initiation complex and thus digest specifically mRNAs. Also impedes antigen presentation by major histocompatibility complex class I and class II molecules, inhibits secretion of cytokines that would otherwise recruit lymphocytes and neutrophils cells to the site of infection and blocks the activation of dendritic cells. Impedes the alpha/beta interferon-mediated response to infection. Inhibits the integrated stress response (ISR) in the infected cell, this function requires the endonuclease activity. Stress granule formation is thus inhibited, which allows protein synthesis and viral replication. This is Virion host shutoff protein (UL41) from Homo sapiens (Human).